The primary structure comprises 226 residues: Small ribosomal subunit protein uS3 (226 aa).

The KH type-2 domain maps to 36–104 (IRKYLENRLS…KIQINIFEIK (69 aa)).

This sequence belongs to the universal ribosomal protein uS3 family. As to quaternary structure, part of the 30S ribosomal subunit. Forms a tight complex with proteins S10 and S14.

Binds the lower part of the 30S subunit head. Binds mRNA in the 70S ribosome, positioning it for translation. The polypeptide is Small ribosomal subunit protein uS3 (Karelsulcia muelleri (strain GWSS) (Sulcia muelleri)).